The primary structure comprises 149 residues: UPF0306 protein PM1958 (149 aa).

The protein belongs to the UPF0306 family.

This chain is UPF0306 protein PM1958, found in Pasteurella multocida (strain Pm70).